Reading from the N-terminus, the 213-residue chain is Thiamine import ATP-binding protein ThiQ (213 aa).

An ABC transporter domain is found at 1–212 (MIELNVTFDY…EQGRIVADQL (212 aa)). 31–38 (GESGAGKS) is an ATP binding site.

Belongs to the ABC transporter superfamily. Thiamine importer (TC 3.A.1.19.1) family. As to quaternary structure, the complex is composed of two ATP-binding proteins (ThiQ), two transmembrane proteins (ThiP) and a solute-binding protein (ThiB).

Its subcellular location is the cell inner membrane. The catalysed reaction is thiamine(out) + ATP + H2O = thiamine(in) + ADP + phosphate + H(+). Part of the ABC transporter complex ThiBPQ involved in thiamine import. Responsible for energy coupling to the transport system. The chain is Thiamine import ATP-binding protein ThiQ from Haemophilus ducreyi (strain 35000HP / ATCC 700724).